Consider the following 134-residue polypeptide: NADH-quinone oxidoreductase subunit A (134 aa).

3 helical membrane-spanning segments follow: residues 14–34 (FFMF…LSWI), 66–86 (FYLI…LYAW), and 96–116 (IGFS…FYLV).

It belongs to the complex I subunit 3 family. NDH-1 is composed of 13 different subunits. Subunits NuoA, H, J, K, L, M, N constitute the membrane sector of the complex.

It is found in the cell membrane. It catalyses the reaction a quinone + NADH + 5 H(+)(in) = a quinol + NAD(+) + 4 H(+)(out). NDH-1 shuttles electrons from NADH, via FMN and iron-sulfur (Fe-S) centers, to quinones in the respiratory chain. The immediate electron acceptor for the enzyme in this species is believed to be ubiquinone. Couples the redox reaction to proton translocation (for every two electrons transferred, four hydrogen ions are translocated across the cytoplasmic membrane), and thus conserves the redox energy in a proton gradient. The chain is NADH-quinone oxidoreductase subunit A from Buchnera aphidicola subsp. Acyrthosiphon pisum (strain APS) (Acyrthosiphon pisum symbiotic bacterium).